Here is a 227-residue protein sequence, read N- to C-terminus: uncharacterized protein (227 aa).

Positions 1–22 (MDSVMRKSLFLLLPLVVTNAHA) are cleaved as a signal peptide.

This is an uncharacterized protein from Salmonella typhi.